Here is a 253-residue protein sequence, read N- to C-terminus: Ribonuclease PH (253 aa).

Phosphate is bound by residues Arg-86 and 124–126 (GTR).

Belongs to the RNase PH family. As to quaternary structure, homohexameric ring arranged as a trimer of dimers.

It carries out the reaction tRNA(n+1) + phosphate = tRNA(n) + a ribonucleoside 5'-diphosphate. Phosphorolytic 3'-5' exoribonuclease that plays an important role in tRNA 3'-end maturation. Removes nucleotide residues following the 3'-CCA terminus of tRNAs; can also add nucleotides to the ends of RNA molecules by using nucleoside diphosphates as substrates, but this may not be physiologically important. Probably plays a role in initiation of 16S rRNA degradation (leading to ribosome degradation) during starvation. The protein is Ribonuclease PH of Brevibacillus brevis (strain 47 / JCM 6285 / NBRC 100599).